A 211-amino-acid chain; its full sequence is Thiamine-phosphate synthase (211 aa).

Residues Q37–K41 and N69 each bind 4-amino-2-methyl-5-(diphosphooxymethyl)pyrimidine. Mg(2+) contacts are provided by D70 and D89. S108 lines the 4-amino-2-methyl-5-(diphosphooxymethyl)pyrimidine pocket. Position 134–136 (T134–T136) interacts with 2-[(2R,5Z)-2-carboxy-4-methylthiazol-5(2H)-ylidene]ethyl phosphate. 4-amino-2-methyl-5-(diphosphooxymethyl)pyrimidine is bound at residue K137. Residues G166 and V186–S187 each bind 2-[(2R,5Z)-2-carboxy-4-methylthiazol-5(2H)-ylidene]ethyl phosphate.

It belongs to the thiamine-phosphate synthase family. Requires Mg(2+) as cofactor.

The enzyme catalyses 2-[(2R,5Z)-2-carboxy-4-methylthiazol-5(2H)-ylidene]ethyl phosphate + 4-amino-2-methyl-5-(diphosphooxymethyl)pyrimidine + 2 H(+) = thiamine phosphate + CO2 + diphosphate. It catalyses the reaction 2-(2-carboxy-4-methylthiazol-5-yl)ethyl phosphate + 4-amino-2-methyl-5-(diphosphooxymethyl)pyrimidine + 2 H(+) = thiamine phosphate + CO2 + diphosphate. The catalysed reaction is 4-methyl-5-(2-phosphooxyethyl)-thiazole + 4-amino-2-methyl-5-(diphosphooxymethyl)pyrimidine + H(+) = thiamine phosphate + diphosphate. The protein operates within cofactor biosynthesis; thiamine diphosphate biosynthesis; thiamine phosphate from 4-amino-2-methyl-5-diphosphomethylpyrimidine and 4-methyl-5-(2-phosphoethyl)-thiazole: step 1/1. In terms of biological role, condenses 4-methyl-5-(beta-hydroxyethyl)thiazole monophosphate (THZ-P) and 2-methyl-4-amino-5-hydroxymethyl pyrimidine pyrophosphate (HMP-PP) to form thiamine monophosphate (TMP). This Enterobacter sp. (strain 638) protein is Thiamine-phosphate synthase.